The following is a 481-amino-acid chain: 1-acylglycerol-3-phosphate O-acyltransferase PNPLA3 (481 aa).

Over 1-41 (MYDAERGWSLSFAGCGFLGFYHVGATRCLSEHAPHLLRDAR) the chain is Cytoplasmic. The region spanning 10–179 (LSFAGCGFLG…SDNVPFIDAK (170 aa)) is the PNPLA domain. Residues 14 to 19 (GCGFLG) carry the GXGXXG motif. A helical; Signal-anchor for type II membrane protein transmembrane segment spans residues 42–62 (MLFGASAGALHCVGVLSGIPL). The GXSXG signature appears at 45-49 (GASAG). Catalysis depends on serine 47, which acts as the Nucleophile. At 63–481 (EQTLQVLSDL…FPSFSLEKSL (419 aa)) the chain is on the lumenal side. The N-linked (GlcNAc...) asparagine glycan is linked to asparagine 89. Residue aspartate 166 is the Proton acceptor of the active site. The short motif at 166 to 168 (DGG) is the DGA/G element. Asparagine 280 carries an N-linked (GlcNAc...) asparagine glycan.

It localises to the membrane. The protein resides in the lipid droplet. It carries out the reaction a 1-acyl-sn-glycero-3-phosphate + an acyl-CoA = a 1,2-diacyl-sn-glycero-3-phosphate + CoA. The catalysed reaction is a triacylglycerol + H2O = a diacylglycerol + a fatty acid + H(+). It catalyses the reaction a 1-acylglycerol + a 1,3-diacylglycerol = a triacylglycerol + glycerol. The enzyme catalyses a 1-acylglycerol + a 1,2-diacylglycerol = a triacylglycerol + glycerol. It carries out the reaction 2 a 1-acylglycerol = a 1,2-diacylglycerol + glycerol. The catalysed reaction is 1-(9Z-octadecenoyl)-sn-glycero-3-phosphate + (9Z)-octadecenoyl-CoA = 1,2-di-(9Z-octadecenoyl)-sn-glycero-3-phosphate + CoA. It catalyses the reaction 1-(9Z-octadecenoyl)-sn-glycero-3-phosphate + hexadecanoyl-CoA = 1-(9Z)-octadecenoyl-2-hexadecanoyl-sn-glycero-3-phosphate + CoA. The enzyme catalyses 1-(9Z-octadecenoyl)-sn-glycero-3-phosphate + (9Z,12Z)-octadecadienoyl-CoA = 1-(9Z)-octadecenoyl-2-(9Z,12Z)-octadecadienoyl-sn-glycero-3-phosphate + CoA. It carries out the reaction 1-(9Z-octadecenoyl)-sn-glycero-3-phosphate + (5Z,8Z,11Z,14Z)-eicosatetraenoyl-CoA = 1-(9Z)-octadecenoyl-2-(5Z,8Z,11Z,14Z)-eicosatetraenoyl-sn-glycero-3-phosphate + CoA. The catalysed reaction is 2 1-(9Z-octadecenoyl)-glycerol = 1,2-di-(9Z-octadecenoyl)-glycerol + glycerol. It catalyses the reaction 1-(9Z-octadecenoyl)-glycerol + 1,2-di-(9Z-octadecenoyl)-glycerol = 1,2,3-tri-(9Z-octadecenoyl)-glycerol + glycerol. The enzyme catalyses 1-(9Z-octadecenoyl)-glycerol + 1,3-di-(9Z-octadecenoyl)-glycerol = 1,2,3-tri-(9Z-octadecenoyl)-glycerol + glycerol. It carries out the reaction 1,2,3-tri-(9Z-octadecenoyl)-glycerol + H2O = 1,3-di-(9Z-octadecenoyl)-glycerol + (9Z)-octadecenoate + H(+). The catalysed reaction is a 1,2-diacyl-sn-glycero-3-phosphocholine + H2O = a 1-acyl-sn-glycero-3-phosphocholine + a fatty acid + H(+). Its pathway is phospholipid metabolism. It functions in the pathway glycerolipid metabolism. Its activity is regulated as follows. The triglyceride lipase activity is inhibited by BEL ((E)-6-(bromomethylene)-3-(1-naphthalenyl)-2H-tetrahydropyran-2-one), a suicide substrate inhibitor. Functionally, specifically catalyzes coenzyme A (CoA)-dependent acylation of 1-acyl-sn-glycerol 3-phosphate (2-lysophosphatidic acid/LPA) to generate phosphatidic acid (PA), an important metabolic intermediate and precursor for both triglycerides and glycerophospholipids. Does not esterify other lysophospholipids. Acyl donors are long chain (at least C16) fatty acyl-CoAs: arachidonoyl-CoA, linoleoyl-CoA, oleoyl-CoA and at a lesser extent palmitoyl-CoA. Additionally possesses low triacylglycerol lipase and CoA-independent acylglycerol transacylase activities and thus may play a role in acyl-chain remodeling of triglycerides. In vitro may express hydrolytic activity against glycerolipids triacylglycerol, diacylglycerol and monoacylglycerol, with a strong preference for oleic acid as the acyl moiety. However, the triacylglycerol hydrolase activity is controversial and may be very low. Possesses phospholipase A2 activity. This Homo sapiens (Human) protein is 1-acylglycerol-3-phosphate O-acyltransferase PNPLA3.